A 331-amino-acid polypeptide reads, in one-letter code: uncharacterized protein (331 aa).

Disordered regions lie at residues 131–163 (ISHA…KKRS) and 190–209 (DEQK…VQSS). The segment covering 140-162 (RPKPTKPRASRKRAAIAQSKKKR) has biased composition (basic residues). Residues 195–209 (RQSTSQPDKEIVQSS) are compositionally biased toward polar residues.

This is an uncharacterized protein from Caenorhabditis elegans.